Reading from the N-terminus, the 27-residue chain is Superoxide dismutase [Mn] (27 aa).

This sequence belongs to the iron/manganese superoxide dismutase family. In terms of assembly, homodimer. The cofactor is Mn(2+).

The enzyme catalyses 2 superoxide + 2 H(+) = H2O2 + O2. Destroys superoxide anion radicals which are normally produced within the cells and which are toxic to biological systems. This chain is Superoxide dismutase [Mn] (sodA), found in Desulfovibrio desulfuricans.